A 115-amino-acid polypeptide reads, in one-letter code: Regulator of ribonuclease activity B (115 aa).

The protein belongs to the RraB family. Interacts with the C-terminal region of Rne.

It localises to the cytoplasm. Functionally, globally modulates RNA abundance by binding to RNase E (Rne) and regulating its endonucleolytic activity. Can modulate Rne action in a substrate-dependent manner by altering the composition of the degradosome. In Aeromonas salmonicida (strain A449), this protein is Regulator of ribonuclease activity B.